The primary structure comprises 298 residues: Nucleotide-binding protein Csal_2229 (298 aa).

ATP is bound at residue 8–15; it reads GRSGSGKS. 59 to 62 is a GTP binding site; sequence DARN.

The protein belongs to the RapZ-like family.

Its function is as follows. Displays ATPase and GTPase activities. This is Nucleotide-binding protein Csal_2229 from Chromohalobacter salexigens (strain ATCC BAA-138 / DSM 3043 / CIP 106854 / NCIMB 13768 / 1H11).